The following is a 969-amino-acid chain: Activity-dependent neuroprotective protein a (969 aa).

The segment at 74-97 adopts a C2H2-type 1 zinc-finger fold; that stretch reads FCCSDCPFASKYFSAYKNHFRNVH. The C2H2-type 2; atypical zinc-finger motif lies at 107–129; that stretch reads LNCSYCTYSGNKRTLETHVRLFH. 2 consecutive C2H2-type zinc fingers follow at residues 169 to 192 and 221 to 244; these read YYCK…YREH and IHCK…IEFH. Residues 401-423 form a C2H2-type 5; atypical zinc finger; the sequence is KICTICNELFPESAYSAHFEKEH. Residues 443–464 form a C2H2-type 6; atypical zinc finger; that stretch reads SKCLYCNRYLPSDSLLNHMLVH. The C2H2-type 7 zinc-finger motif lies at 466–489; it reads LSCPHCHSTFHEVEKIVAHNRLAH. Residues 583-608 form a C2H2-type 8; atypical zinc finger; it reads TLCPLCFTILKGPISDALAHHLRDSH. A C2H2-type 9; atypical zinc finger spans residues 623–647; the sequence is YKCIHCLGVYTSNMTASTITLHLVH. Residues 659-689 form a disordered region; sequence KPITTGLRSPGAGSLKRELVTPDPSDPKRRK. Positions 732-774 form a DNA-binding region, homeobox; that stretch reads AYFNRHPYPSQREVEKLAASLWLWKSDVASHFGNHRRLCDRDF. A disordered region spans residues 911–949; it reads DVRANRSSPRVGPKVLDGSVSSSSPDEATWSGNMSSEES. Residues 929–946 show a composition bias toward polar residues; sequence SVSSSSPDEATWSGNMSS.

Interacts with catenin beta-1/ctnnb1.

It is found in the nucleus. Functionally, may be involved in transcriptional regulation. Positively modulates wnt-beta-catenin/ctnnb1 signaling. Required for embryonic neurogenesis. Required for progression through late erythroid differentiation. The chain is Activity-dependent neuroprotective protein a from Danio rerio (Zebrafish).